The chain runs to 328 residues: Cytochrome f (328 aa).

The N-terminal stretch at 1–44 (MRNPDTLGLWTKTMVALRRFTVLAIATVSVFLITDLGLPQAASA) is a signal peptide. Residues Tyr-45, Cys-66, Cys-69, and His-70 each contribute to the heme site. Residues 296–313 (FLVLFLAGIMLSQILLVL) traverse the membrane as a helical segment.

Belongs to the cytochrome f family. As to quaternary structure, the 4 large subunits of the cytochrome b6-f complex are cytochrome b6, subunit IV (17 kDa polypeptide, PetD), cytochrome f and the Rieske protein, while the 4 small subunits are PetG, PetL, PetM and PetN. The complex functions as a dimer. The cofactor is heme.

It localises to the cellular thylakoid membrane. Component of the cytochrome b6-f complex, which mediates electron transfer between photosystem II (PSII) and photosystem I (PSI), cyclic electron flow around PSI, and state transitions. The protein is Cytochrome f (petA) of Synechocystis sp. (strain ATCC 27184 / PCC 6803 / Kazusa).